Consider the following 119-residue polypeptide: Ribonuclease P protein component (119 aa).

It belongs to the RnpA family. As to quaternary structure, consists of a catalytic RNA component (M1 or rnpB) and a protein subunit.

The enzyme catalyses Endonucleolytic cleavage of RNA, removing 5'-extranucleotides from tRNA precursor.. In terms of biological role, RNaseP catalyzes the removal of the 5'-leader sequence from pre-tRNA to produce the mature 5'-terminus. It can also cleave other RNA substrates such as 4.5S RNA. The protein component plays an auxiliary but essential role in vivo by binding to the 5'-leader sequence and broadening the substrate specificity of the ribozyme. This is Ribonuclease P protein component from Haemophilus influenzae (strain 86-028NP).